The sequence spans 387 residues: Phosphoglycerate kinase (387 aa).

Substrate-binding positions include 21–23 (DLN), Arg36, 59–62 (HLGR), Arg113, and Arg146. ATP-binding positions include Lys197, Glu314, and 340–343 (GGDT).

It belongs to the phosphoglycerate kinase family. Monomer.

It is found in the cytoplasm. It catalyses the reaction (2R)-3-phosphoglycerate + ATP = (2R)-3-phospho-glyceroyl phosphate + ADP. The protein operates within carbohydrate degradation; glycolysis; pyruvate from D-glyceraldehyde 3-phosphate: step 2/5. This is Phosphoglycerate kinase from Pseudomonas aeruginosa (strain ATCC 15692 / DSM 22644 / CIP 104116 / JCM 14847 / LMG 12228 / 1C / PRS 101 / PAO1).